Here is a 907-residue protein sequence, read N- to C-terminus: Catenin alpha-1 (907 aa).

Basic and acidic residues predominate over residues 870-879 (VKREKLDDGQ). The disordered stretch occupies residues 870–895 (VKREKLDDGQTNKVKRSSQKKHINPV). A compositionally biased stretch (basic residues) spans 882–892 (KVKRSSQKKHI).

This sequence belongs to the vinculin/alpha-catenin family. In terms of assembly, interacts with ctnnb1, jupa and cdh2. Interacts with cdh1 during early stages of oogenesis, interaction is no longer present when oocyte develops into the unfertilized egg. Expressed in the skin (at protein level). Expressed in the ovary.

The protein localises to the cell junction. Its subcellular location is the adherens junction. It is found in the cytoplasm. The protein resides in the cytoskeleton. It localises to the cell membrane. The protein localises to the nucleus. Its function is as follows. Associates with the cytoplasmic domain of a variety of cadherins, forming catenin and cadherin complexes which are further linked to the actin filament network and is thereby involved in cell-cell adhesion. Required for embryonic development, via maintenance of adherens junctions that facilitate the maintenance of the epithelial barrier. The sequence is that of Catenin alpha-1 from Danio rerio (Zebrafish).